Here is a 607-residue protein sequence, read N- to C-terminus: T-box transcription factor TBX18 (607 aa).

The short motif at 18 to 28 is the Engrailed homology 1 repressor element; that stretch reads HAFSVEALIGA. Residues 30 to 141 are disordered; the sequence is KQQQLQKKRR…PLPSPQAPRV (112 aa). Residues 36 to 40 carry the Nuclear localization signal motif; sequence KKRRK. The segment covering 44–53 has biased composition (low complexity); the sequence is EEAAGAVDDG. Residues 143 to 330 constitute a DNA-binding region (T-box); that stretch reads LQGAELWKRF…RNPFAKGFRD (188 aa).

In terms of assembly, homodimer. Can form a heterodimer with TBX15. Interacts with GATA4 and NKX2-5. Interacts with PAX3. Interacts (via engrailed homology 1 repressor motif) with TLE3; this interaction represses TBX18 transcriptional activity. Interacts with SIX1.

It localises to the nucleus. Acts as a transcriptional repressor involved in developmental processes of a variety of tissues and organs, including the heart and coronary vessels, the ureter and the vertebral column. Required for embryonic development of the sino atrial node (SAN) head area. The sequence is that of T-box transcription factor TBX18 (TBX18) from Homo sapiens (Human).